The chain runs to 388 residues: Chalcone synthase D (388 aa).

Residue Cys-164 is part of the active site.

The protein belongs to the thiolase-like superfamily. Chalcone/stilbene synthases family.

It carries out the reaction (E)-4-coumaroyl-CoA + 3 malonyl-CoA + 3 H(+) = 2',4,4',6'-tetrahydroxychalcone + 3 CO2 + 4 CoA. The protein operates within secondary metabolite biosynthesis; flavonoid biosynthesis. In terms of biological role, the primary product of this enzyme is 4,2',4',6'-tetrahydroxychalcone (also termed naringenin-chalcone or chalcone) which can under specific conditions spontaneously isomerize into naringenin. The protein is Chalcone synthase D (CHSD) of Ipomoea nil (Japanese morning glory).